We begin with the raw amino-acid sequence, 316 residues long: Ribosomal protein L11 methyltransferase (316 aa).

S-adenosyl-L-methionine-binding residues include Thr-157, Gly-178, Asp-200, and Asn-243.

It belongs to the methyltransferase superfamily. PrmA family.

The protein resides in the cytoplasm. It carries out the reaction L-lysyl-[protein] + 3 S-adenosyl-L-methionine = N(6),N(6),N(6)-trimethyl-L-lysyl-[protein] + 3 S-adenosyl-L-homocysteine + 3 H(+). Methylates ribosomal protein L11. This chain is Ribosomal protein L11 methyltransferase, found in Streptococcus pneumoniae (strain P1031).